The following is a 304-amino-acid chain: Tissue factor pathway inhibitor (304 aa).

Positions 1–28 (MIYTMKKVHALWASVCLLLNLAPAPLNA) are cleaved as a signal peptide. Thr-42 carries O-linked (GalNAc...) threonine; partial glycosylation. BPTI/Kunitz inhibitor domains are found at residues 54–104 (CAFK…KKMC) and 125–175 (CFLE…KNIC). Disulfide bonds link Cys-54/Cys-104, Cys-63/Cys-87, Cys-79/Cys-100, Cys-125/Cys-175, Cys-134/Cys-158, and Cys-150/Cys-171. Residue Asn-145 is glycosylated (N-linked (GlcNAc...) asparagine). Asn-195 carries an N-linked (GlcNAc...) asparagine glycan. Residue Ser-202 is glycosylated (O-linked (GalNAc...) serine; partial). Thr-203 is a glycosylation site (O-linked (GalNAc...) threonine). Positions 217–267 (CLTPADRGLCRANENRFYYNSVIGKCRPFKYSGCGGNENNFTSKQECLRAC) constitute a BPTI/Kunitz inhibitor 3 domain. Disulfide bonds link Cys-217-Cys-267, Cys-226-Cys-250, and Cys-242-Cys-263.

In terms of processing, O-glycosylated. As to expression, mostly in endothelial cells.

It localises to the secreted. Its subcellular location is the microsome membrane. In terms of biological role, inhibits factor X (X(a)) directly and, in a Xa-dependent way, inhibits VIIa/tissue factor activity, presumably by forming a quaternary Xa/LACI/VIIa/TF complex. It possesses an antithrombotic action and also the ability to associate with lipoproteins in plasma. In Homo sapiens (Human), this protein is Tissue factor pathway inhibitor (TFPI).